A 313-amino-acid chain; its full sequence is Type I restriction enzyme EcoprrI endonuclease subunit (313 aa).

It belongs to the HsdR family. In terms of assembly, the type I restriction/modification system is composed of three polypeptides R, M and S; the restriction enzyme has stoichiometry R(2)M(2)S(1) while the methyltransferase is M(2)S(1).

The enzyme catalyses Endonucleolytic cleavage of DNA to give random double-stranded fragments with terminal 5'-phosphates, ATP is simultaneously hydrolyzed.. Functionally, the subtype C restriction (R) subunit of a type I restriction enzyme that recognizes 5'-CCAN(7)RTGC-3' and cleaves a random distance away. The R subunit is required for both endonuclease and ATPase activities but not for modification. Cleaves only non-methylated DNA, hemi-methylated and fully methylated DNA are not substrates. After locating a non-methylated recognition site, the enzyme complex serves as a molecular motor that translocates DNA in an ATP-dependent manner until a collision occurs that triggers cleavage. The prr locus restricts phage T4 mutants lacking polynucleotide kinase or RNA ligase; T4 mutants lacking these genes manifest a T4-induced anticodon nuclease (ACNase). This is a putative 'masking-agent' for the ACNase encoded by prrC. It is thought that Stp and other T4-encoded ACNase factors counteract the masking agents, thus activating the latent ACNase. The protein is Type I restriction enzyme EcoprrI endonuclease subunit of Escherichia coli.